The following is a 394-amino-acid chain: Protein NDRG1 (394 aa).

Ser2 carries the post-translational modification N-acetylserine. Phosphoserine is present on residues Ser2, Ser319, and Ser326. The disordered stretch occupies residues 325–394; the sequence is RSRTASGSSV…AGPKSMEVSC (70 aa). Positions 327-339 are enriched in polar residues; that stretch reads RTASGSSVTSLEG. Thr328 carries the phosphothreonine modification. Ser330 carries the post-translational modification Phosphoserine; by SGK1. Phosphoserine is present on residues Ser332 and Ser333. A Phosphothreonine modification is found at Thr335. Ser336 is subject to Phosphoserine. 3 consecutive repeat copies span residues 339–348, 349–358, and 359–368. Positions 339 to 368 are 3 X 10 AA tandem repeats of G-[PST]-R-S-R-S-H-T-S-E; it reads GTRSRSHTSEGPRSRSHTSEGSRSRSHTSE. At Thr340 the chain carries Phosphothreonine. The residue at position 342 (Ser342) is a Phosphoserine. Residues 345–371 show a composition bias toward basic and acidic residues; that stretch reads HTSEGPRSRSHTSEGSRSRSHTSEDAR. Residue Thr346 is modified to Phosphothreonine; by SGK1. Ser352 is modified (phosphoserine). Position 356 is a phosphothreonine; by SGK1 (Thr356). Phosphoserine is present on residues Ser362 and Ser364. Thr366 bears the Phosphothreonine; by SGK1 mark. Residues 374–386 show a composition bias toward polar residues; the sequence is ITPNSGATGNNAG. A Phosphothreonine modification is found at Thr375.

It belongs to the NDRG family. Interacts with RAB4A (membrane-bound form); the interaction involves NDRG1 in vesicular recycling of CDH1. Interacts with APOA1, APOA2, PRA1 and RTN1. In terms of processing, under stress conditions, phosphorylated in the C-terminal on many serine and threonine residues. Phosphorylated in vitro by PKA. Phosphorylation enhanced by increased intracellular cAMP levels. Homocysteine induces dephosphorylation. Phosphorylation by SGK1 is cell cycle dependent. In terms of tissue distribution, widely expressed, with highest levels in kidney followed by brain, pancreas, small intestine, colon and spleen (at protein level). Also detected in heart and preputial gland, and in much smaller quantities in other tissues. Not detected in duodenum and prostate. Highly expressed in Schwann cells.

The protein resides in the cytoplasm. Its subcellular location is the cytosol. The protein localises to the cytoskeleton. It is found in the microtubule organizing center. It localises to the centrosome. The protein resides in the nucleus. Its subcellular location is the cell membrane. Its function is as follows. Stress-responsive protein involved in hormone responses, cell growth, and differentiation. Acts as a tumor suppressor in many cell types. Necessary but not sufficient for p53/TP53-mediated caspase activation and apoptosis. Required for vesicular recycling of CDH1 and TF. May also function in lipid trafficking. Protects cells from spindle disruption damage. Functions in p53/TP53-dependent mitotic spindle checkpoint. Regulates microtubule dynamics and maintains euploidy. Has a role in cell trafficking notably of the Schwann cell and is necessary for the maintenance and development of the peripheral nerve myelin sheath. This chain is Protein NDRG1 (Ndrg1), found in Mus musculus (Mouse).